We begin with the raw amino-acid sequence, 68 residues long: Small integral membrane protein 10-like protein 1 (68 aa).

Residues 1-21 (MAPAAAPSSLAVRASSPAATP) are disordered.

This chain is Small integral membrane protein 10-like protein 1, found in Homo sapiens (Human).